A 448-amino-acid chain; its full sequence is Bifunctional F420 biosynthesis protein FbiB (448 aa).

A coenzyme F420:L-glutamate ligase region spans residues 1-244; sequence MTGPEHGSAS…PGANDLFWLG (244 aa). Residues 20 to 23, serine 50, and lysine 55 each bind GTP; that span reads LPEF. Aspartate 109 contacts a divalent metal cation. Asparagine 112 is a GTP binding site. 2 residues coordinate a divalent metal cation: aspartate 150 and threonine 151. Residues 245–448 are dehydro-coenzyme F420-0 reductase; it reads TAEALELGRQ…VPAADLLILK (204 aa). FMN contacts are provided by residues 260–264 and alanine 288; that span reads RRSVR. Aspartate 320 contacts coenzyme F420-(gamma-Glu)n. The FMN site is built by glycine 399 and arginine 436.

In the N-terminal section; belongs to the CofE family. Mg(2+) is required as a cofactor. Mn(2+) serves as cofactor. The cofactor is K(+).

The catalysed reaction is oxidized coenzyme F420-0 + GTP + L-glutamate = oxidized coenzyme F420-1 + GDP + phosphate + H(+). It carries out the reaction oxidized coenzyme F420-1 + GTP + L-glutamate = oxidized coenzyme F420-2 + GDP + phosphate + H(+). It catalyses the reaction oxidized coenzyme F420-(gamma-L-Glu)(n) + GTP + L-glutamate = oxidized coenzyme F420-(gamma-L-Glu)(n+1) + GDP + phosphate + H(+). The enzyme catalyses oxidized coenzyme F420-0 + FMN + H(+) = dehydro coenzyme F420-0 + FMNH2. It participates in cofactor biosynthesis; coenzyme F420 biosynthesis. Functionally, bifunctional enzyme that catalyzes the GTP-dependent successive addition of multiple gamma-linked L-glutamates to the L-lactyl phosphodiester of 7,8-didemethyl-8-hydroxy-5-deazariboflavin (F420-0) to form polyglutamated F420 derivatives, and the FMNH2-dependent reduction of dehydro-F420-0 to form F420-0. This Mycobacterium tuberculosis (strain ATCC 25177 / H37Ra) protein is Bifunctional F420 biosynthesis protein FbiB.